Here is a 430-residue protein sequence, read N- to C-terminus: Adenylosuccinate synthetase (430 aa).

Residues 12–18 (GDEGKGK) and 40–42 (GHT) contribute to the GTP site. The active-site Proton acceptor is the Asp-13. Residues Asp-13 and Gly-40 each coordinate Mg(2+). Residues 13–16 (DEGK), 38–41 (NAGH), Thr-128, Arg-142, Gln-223, Thr-238, and Arg-302 contribute to the IMP site. His-41 (proton donor) is an active-site residue. 298–304 (TTTGRPR) lines the substrate pocket. Residues Arg-304, 330–332 (SID), and 412–414 (SVG) contribute to the GTP site.

The protein belongs to the adenylosuccinate synthetase family. Homodimer. Requires Mg(2+) as cofactor.

The protein resides in the cytoplasm. It catalyses the reaction IMP + L-aspartate + GTP = N(6)-(1,2-dicarboxyethyl)-AMP + GDP + phosphate + 2 H(+). It participates in purine metabolism; AMP biosynthesis via de novo pathway; AMP from IMP: step 1/2. Plays an important role in the de novo pathway of purine nucleotide biosynthesis. Catalyzes the first committed step in the biosynthesis of AMP from IMP. The protein is Adenylosuccinate synthetase of Streptococcus pyogenes serotype M4 (strain MGAS10750).